The chain runs to 393 residues: Serine/threonine-protein kinase US3 homolog (393 aa).

Residues 93–378 (FVILKTFTPG…AEVLLNHSVF (286 aa)) form the Protein kinase domain. Residues 99 to 107 (FTPGAEGFA) and Lys122 each bind ATP. Residue Asp206 is the Proton acceptor of the active site.

It belongs to the protein kinase superfamily. Ser/Thr protein kinase family. Phosphorylated by ORF47; this phosphorylation regulates subsequent phosphorylation of proteins 24 and 27 by ORF66. Autophosphorylated.

It is found in the host cytoplasm. It localises to the host nucleus. The enzyme catalyses L-seryl-[protein] + ATP = O-phospho-L-seryl-[protein] + ADP + H(+). It carries out the reaction L-threonyl-[protein] + ATP = O-phospho-L-threonyl-[protein] + ADP + H(+). In terms of biological role, multifunctional serine/threonine kinase that plays a role in several processes including egress of virus particles from the nucleus, modulation of the actin cytoskeleton and inhibition of apoptosis. Phosphorylates proteins 24 and 27, two critical regulators of capsid budding from nucleus to endoplasmic reticulum, thereby facilitating virion egress. Modulates and redistributes host components of the nuclear envelope, including LMNA, emerin/EMD and the nuclear matrix protein MATR3. Phosphorylates envelope glycoprotein B (gB), probably to direct it to the cell surface. Promotes virus intracellular spread by restructuring host cell cytoskeleton. Blocks host apoptosis to extend cell survival and allow efficient viral replication. Promotes viral gene expression by phosphorylating host HDAC2 to reduce viral genome silencing. Down-regulates class I major histocompatibility complex (MHC-I) surface expression. Additionally, phosphorylates IE62 and targets it to the cytoplasm. The nuclear exclusion of IE62 enables the packaging of abundant levels of IE62 into virions. The polypeptide is Serine/threonine-protein kinase US3 homolog (66) (Varicella-zoster virus (strain Dumas) (HHV-3)).